A 483-amino-acid polypeptide reads, in one-letter code: Glutamyl-tRNA(Gln) amidotransferase subunit A (483 aa).

Active-site charge relay system residues include Lys-76 and Ser-151. The active-site Acyl-ester intermediate is the Ser-175.

Belongs to the amidase family. GatA subfamily. As to quaternary structure, heterotrimer of A, B and C subunits.

It catalyses the reaction L-glutamyl-tRNA(Gln) + L-glutamine + ATP + H2O = L-glutaminyl-tRNA(Gln) + L-glutamate + ADP + phosphate + H(+). Allows the formation of correctly charged Gln-tRNA(Gln) through the transamidation of misacylated Glu-tRNA(Gln) in organisms which lack glutaminyl-tRNA synthetase. The reaction takes place in the presence of glutamine and ATP through an activated gamma-phospho-Glu-tRNA(Gln). The protein is Glutamyl-tRNA(Gln) amidotransferase subunit A of Chromobacterium violaceum (strain ATCC 12472 / DSM 30191 / JCM 1249 / CCUG 213 / NBRC 12614 / NCIMB 9131 / NCTC 9757 / MK).